The following is a 242-amino-acid chain: Leucyl/phenylalanyl-tRNA--protein transferase (242 aa).

This sequence belongs to the L/F-transferase family.

It localises to the cytoplasm. It catalyses the reaction N-terminal L-lysyl-[protein] + L-leucyl-tRNA(Leu) = N-terminal L-leucyl-L-lysyl-[protein] + tRNA(Leu) + H(+). The catalysed reaction is N-terminal L-arginyl-[protein] + L-leucyl-tRNA(Leu) = N-terminal L-leucyl-L-arginyl-[protein] + tRNA(Leu) + H(+). It carries out the reaction L-phenylalanyl-tRNA(Phe) + an N-terminal L-alpha-aminoacyl-[protein] = an N-terminal L-phenylalanyl-L-alpha-aminoacyl-[protein] + tRNA(Phe). Functions in the N-end rule pathway of protein degradation where it conjugates Leu, Phe and, less efficiently, Met from aminoacyl-tRNAs to the N-termini of proteins containing an N-terminal arginine or lysine. The chain is Leucyl/phenylalanyl-tRNA--protein transferase from Alcanivorax borkumensis (strain ATCC 700651 / DSM 11573 / NCIMB 13689 / SK2).